A 127-amino-acid polypeptide reads, in one-letter code: Fluoride-specific ion channel FluC (127 aa).

Transmembrane regions (helical) follow at residues 4–24 (SLLV…LLGM), 37–57 (TVVA…FLAA), 68–88 (LIIT…AETV), and 96–116 (LLWA…MTAA). Residues G75 and T78 each contribute to the Na(+) site.

It belongs to the fluoride channel Fluc/FEX (TC 1.A.43) family.

The protein resides in the cell inner membrane. The enzyme catalyses fluoride(in) = fluoride(out). With respect to regulation, na(+) is not transported, but it plays an essential structural role and its presence is essential for fluoride channel function. Functionally, fluoride-specific ion channel. Important for reducing fluoride concentration in the cell, thus reducing its toxicity. In Pseudomonas syringae pv. maculicola, this protein is Fluoride-specific ion channel FluC.